A 436-amino-acid polypeptide reads, in one-letter code: MDLGTTKYIIYTELIADGYVEKHDVIGAIFGQTEGLLSNELDLRDLQKSGRIGRIDVELENINGKSFAKITLPSSLDKVETSILAATLETIDRVGPCFATVKITEVEDIRVSKRQYITNRARSILRKLMDEMIDTYEITEEIKESLRTEEIMEYGPENLPCGPNIIHSDSIIVVEGRADVLNLLRCGIKNTVAVEGTSVPKSIMELTKKKTTTAFTDGDRGGELILKELLQTCDIDYVARAPYGKEVEGTSKKELMKCLRAKVPVEQIVGNNCNGSGVIESNTPKEIVEPITPKHFEKVETPAVIEPVFKEDAIEEETIIVEPVKKAETEIIDVDATNETQSEKKFSGVKEIVDSIKNTGNVKFVVDGTEKTNTFKEFLTNIHEIKKMDFFAADMPISQKIVDLLYDKTPIIVGKEINVTKKPVNLRLFSFDEIVA.

Positions 169–243 (DSIIVVEGRA…DIDYVARAPY (75 aa)) constitute a Toprim domain. Glu-175, Asp-217, and Asp-219 together coordinate Mg(2+).

It belongs to the archaeal DnaG primase family. As to quaternary structure, forms a ternary complex with MCM helicase and DNA. Mg(2+) serves as cofactor.

It catalyses the reaction ssDNA + n NTP = ssDNA/pppN(pN)n-1 hybrid + (n-1) diphosphate.. In terms of biological role, RNA polymerase that catalyzes the synthesis of short RNA molecules used as primers for DNA polymerase during DNA replication. This Methanococcus maripaludis (strain DSM 14266 / JCM 13030 / NBRC 101832 / S2 / LL) protein is DNA primase DnaG.